Consider the following 260-residue polypeptide: Global transcriptional regulator CodY (260 aa).

The interval 1–159 (MPNLLEKTRK…SSTVVGIQLL (159 aa)) is GAF domain. Residues 207 to 226 (ASVIADRIGITRSVIVNALR) constitute a DNA-binding region (H-T-H motif).

The protein belongs to the CodY family.

It is found in the cytoplasm. Functionally, DNA-binding global transcriptional regulator which is involved in the adaptive response to starvation and acts by directly or indirectly controlling the expression of numerous genes in response to nutrient availability. During rapid exponential growth, CodY is highly active and represses genes whose products allow adaptation to nutrient depletion. This Streptococcus pyogenes serotype M3 (strain SSI-1) protein is Global transcriptional regulator CodY.